We begin with the raw amino-acid sequence, 78 residues long: Large ribosomal subunit protein bL28 (78 aa).

The segment at 1 to 20 is disordered; sequence MSRVCQVTGKRPAVGNNRSH.

The protein belongs to the bacterial ribosomal protein bL28 family.

The sequence is that of Large ribosomal subunit protein bL28 from Actinobacillus pleuropneumoniae serotype 7 (strain AP76).